A 117-amino-acid chain; its full sequence is Ig heavy chain V region 23 (117 aa).

The signal sequence occupies residues 1-19 (MGWSCIILFLVAAANGVHS). Residues 20 to 49 (QVQLQQPGTELVKPGASVKLSCKASGYTFT) form a framework-1 region. Cysteines 41 and 115 form a disulfide. The complementarity-determining-1 stretch occupies residues 50 to 54 (SYWMH). Residues 55-68 (WVKQRPGQGLEWIG) form a framework-2 region. Residues 69 to 85 (NINPGNGGTNYNEKFKS) are complementarity-determining-2. The segment at 86–117 (KVTLTVDKSSSTAYTQLSSLTSEDSAVYYCAR) is framework-3.

This chain is Ig heavy chain V region 23, found in Mus musculus (Mouse).